A 361-amino-acid chain; its full sequence is Peptide chain release factor 1 (361 aa).

At glutamine 236 the chain carries N5-methylglutamine.

This sequence belongs to the prokaryotic/mitochondrial release factor family. In terms of processing, methylated by PrmC. Methylation increases the termination efficiency of RF1.

Its subcellular location is the cytoplasm. Peptide chain release factor 1 directs the termination of translation in response to the peptide chain termination codons UAG and UAA. This chain is Peptide chain release factor 1, found in Levilactobacillus brevis (strain ATCC 367 / BCRC 12310 / CIP 105137 / JCM 1170 / LMG 11437 / NCIMB 947 / NCTC 947) (Lactobacillus brevis).